The sequence spans 548 residues: SH2B adapter protein 3 (548 aa).

Over residues 1 to 11 (MNEPTVQPSRT) the composition is skewed to polar residues. Disordered stretches follow at residues 1–25 (MNEP…RGWS), 78–108 (SLAG…DLGP), and 128–160 (RSAG…LLPW). A compositionally biased stretch (low complexity) spans 12–21 (SSAPASPASP). Residues serine 13, serine 102, and serine 129 each carry the phosphoserine modification. A compositionally biased stretch (polar residues) spans 137-148 (TSDTNDIDTTAA). The 112-residue stretch at 168–279 (EALKEVVLRY…WLAELRASTG (112 aa)) folds into the PH domain. The segment at 290 to 313 (PLSLAAEPGPARSPRGSTDSLDQG) is disordered. Phosphoserine is present on serine 302. The 99-residue stretch at 336–434 (WFHGPISRVR…ACDVRLSGYV (99 aa)) folds into the SH2 domain.

The protein belongs to the SH2B adapter family. In terms of processing, tyrosine phosphorylated.

In terms of biological role, links T-cell receptor activation signal to phospholipase C-gamma-1, GRB2 and phosphatidylinositol 3-kinase. The protein is SH2B adapter protein 3 (Sh2b3) of Mus musculus (Mouse).